The chain runs to 388 residues: Lamin tail domain-containing protein 1 (388 aa).

In terms of domain architecture, LTD spans E136 to H254. Positions E349 to Q388 are disordered. Basic residues predominate over residues R365 to K381.

The protein belongs to the intermediate filament family.

This chain is Lamin tail domain-containing protein 1 (LMNTD1), found in Homo sapiens (Human).